The following is a 355-amino-acid chain: MGDSRNTGTISNLSSALRQVNIGSGQDQKNINYEFSNGLNNNVNDNGNHNLVNTNEDNVNKDGSINTNMMSRQVPIQHTHGSQLLQQERMNEQQFNPMEYSRISKFFQNQPMEGYTLFSHRSAPNGFKVSIVLSELGLQYNTIFLDFNLGEHRAPEFVSVNPNARVPALIDHGLENLAIWESGAILLHLVNKFYKETGNPLLWSDDLADQAQINAWLFFQTSGHAPMIGQALHFRYFHTQKIESAVERYTEEVRRVYGVIEMALAERREALIMELDTDNAAAYSAGTTPLSQSRFFDYPVWLVGDKLTIADLSFVPWNNVVDRIGINIKVEFPEVYKWTKHMMRRPAVIKALRGE.

Positions 113 to 197 (EGYTLFSHRS…HLVNKFYKET (85 aa)) constitute a GST N-terminal domain. The 150-residue stretch at 206–355 (DLADQAQINA…PAVIKALRGE (150 aa)) folds into the GST C-terminal domain.

This sequence belongs to the GST superfamily. As to quaternary structure, homodimer.

Functionally, plays an important role in the cellular response to the nitrogen source. URE2 gene plays a major part in the repression of GLN1 and GDH2 genes by glutamine, and is required for the inactivation of glutamine synthetase. URE2 gene product may catalytically inactivate GLN3 in response to an increase in the intracellular concentration of glutamine. This Candida glabrata (strain ATCC 2001 / BCRC 20586 / JCM 3761 / NBRC 0622 / NRRL Y-65 / CBS 138) (Yeast) protein is Protein URE2 (URE2).